The following is a 346-amino-acid chain: Methylthioribose-1-phosphate isomerase (346 aa).

Substrate is bound by residues 48–50 (RGA), Arg91, and Gln200. The active-site Proton donor is Asp241. 251–252 (NK) contributes to the substrate binding site.

Belongs to the eIF-2B alpha/beta/delta subunits family. MtnA subfamily.

It catalyses the reaction 5-(methylsulfanyl)-alpha-D-ribose 1-phosphate = 5-(methylsulfanyl)-D-ribulose 1-phosphate. It functions in the pathway amino-acid biosynthesis; L-methionine biosynthesis via salvage pathway; L-methionine from S-methyl-5-thio-alpha-D-ribose 1-phosphate: step 1/6. Its function is as follows. Catalyzes the interconversion of methylthioribose-1-phosphate (MTR-1-P) into methylthioribulose-1-phosphate (MTRu-1-P). In Picosynechococcus sp. (strain ATCC 27264 / PCC 7002 / PR-6) (Agmenellum quadruplicatum), this protein is Methylthioribose-1-phosphate isomerase.